The chain runs to 157 residues: 3-hydroxyacyl-[acyl-carrier-protein] dehydratase FabZ (157 aa).

His-58 is an active-site residue.

The protein belongs to the thioester dehydratase family. FabZ subfamily.

It is found in the cytoplasm. It carries out the reaction a (3R)-hydroxyacyl-[ACP] = a (2E)-enoyl-[ACP] + H2O. In terms of biological role, involved in unsaturated fatty acids biosynthesis. Catalyzes the dehydration of short chain beta-hydroxyacyl-ACPs and long chain saturated and unsaturated beta-hydroxyacyl-ACPs. In Rhizobium rhizogenes (strain K84 / ATCC BAA-868) (Agrobacterium radiobacter), this protein is 3-hydroxyacyl-[acyl-carrier-protein] dehydratase FabZ.